Here is a 672-residue protein sequence, read N- to C-terminus: APC membrane recruitment protein 2 (672 aa).

The segment covering 1–21 (METGRSRGGGAAVSERGGGAR) has biased composition (gly residues). Disordered stretches follow at residues 1-23 (METGRSRGGGAAVSERGGGARAG), 74-360 (TMPS…DPSA), and 443-560 (MLSQ…DALC). A compositionally biased stretch (low complexity) spans 142–158 (GSLASSSVAKSHSFFSL). Residue Ser154 is modified to Phosphoserine. Composition is skewed to basic and acidic residues over residues 163–175 (GRSETGKGDHAEA) and 201–210 (RGKEEEEKAV). A phosphoserine mark is found at Ser223, Ser227, and Ser244. The segment covering 230–254 (CVKEEPPRAARRPDSPGQDASRHAA) has biased composition (basic and acidic residues). Residues 255–269 (GEPAGGEQAPASAES) are compositionally biased toward low complexity. Ser284 is subject to Phosphoserine. Over residues 289–303 (SRGEDAEGHRREEKP) the composition is skewed to basic and acidic residues. Over residues 343-354 (ASAVPDPSSVDP) the composition is skewed to low complexity. Residues Ser356 and Ser359 each carry the phosphoserine modification. A compositionally biased stretch (low complexity) spans 446 to 457 (QTEDQGQGTQEG). 2 stretches are compositionally biased toward basic and acidic residues: residues 478 to 488 (RCGEAAKDMSS) and 502 to 516 (QQKEEPKHPEKEHQE).

Belongs to the Amer family. In terms of assembly, interacts with APC.

Its subcellular location is the cell membrane. Its function is as follows. Negative regulator of the canonical Wnt signaling pathway involved in neuroectodermal patterning. Acts by specifically binding phosphatidylinositol 4,5-bisphosphate (PtdIns(4,5)P2), translocating to the cell membrane and interacting with key regulators of the canonical Wnt signaling pathway, such as components of the beta-catenin destruction complex. This chain is APC membrane recruitment protein 2 (Amer2), found in Mus musculus (Mouse).